The following is a 142-amino-acid chain: Large ribosomal subunit protein uL13 (142 aa).

Belongs to the universal ribosomal protein uL13 family. Part of the 50S ribosomal subunit.

This protein is one of the early assembly proteins of the 50S ribosomal subunit, although it is not seen to bind rRNA by itself. It is important during the early stages of 50S assembly. The protein is Large ribosomal subunit protein uL13 of Shewanella oneidensis (strain ATCC 700550 / JCM 31522 / CIP 106686 / LMG 19005 / NCIMB 14063 / MR-1).